A 105-amino-acid chain; its full sequence is Urease subunit beta (105 aa).

The protein belongs to the urease beta subunit family. Heterotrimer of UreA (gamma), UreB (beta) and UreC (alpha) subunits. Three heterotrimers associate to form the active enzyme.

The protein localises to the cytoplasm. The catalysed reaction is urea + 2 H2O + H(+) = hydrogencarbonate + 2 NH4(+). The protein operates within nitrogen metabolism; urea degradation; CO(2) and NH(3) from urea (urease route): step 1/1. In Shewanella halifaxensis (strain HAW-EB4), this protein is Urease subunit beta.